Here is a 475-residue protein sequence, read N- to C-terminus: Fez family zinc finger protein 1 (475 aa).

The Engrailed homology 1 repressor motif lies at proline 28–proline 43. 6 consecutive C2H2-type zinc fingers follow at residues phenylalanine 260–histidine 282, phenylalanine 288–histidine 310, histidine 316–histidine 338, phenylalanine 344–histidine 366, phenylalanine 372–histidine 394, and phenylalanine 400–histidine 423. A disordered region spans residues glycine 428–glutamine 475. Pro residues predominate over residues threonine 439–leucine 466.

Belongs to the krueppel C2H2-type zinc-finger protein family. As to expression, expressed in brain. Little or no expression in other tissues. Overexpressed specifically in gastric cancers. A 2- to 20-fold increase is found in over 50% of gastric cancer tissues.

The protein resides in the nucleus. Its function is as follows. Transcription repressor. Involved in the axonal projection and proper termination of olfactory sensory neurons (OSN). Plays a role in rostro-caudal patterning of the diencephalon and in prethalamic formation. Expression is required in OSN to cell-autonomously regulate OSN axon projections. Regulates non-cell-autonomously the layer formation of the olfactory bulb development and the interneurons. May be required for correct rostral migration of the interneuron progenitors. The sequence is that of Fez family zinc finger protein 1 (FEZF1) from Homo sapiens (Human).